A 69-amino-acid polypeptide reads, in one-letter code: UPF0346 protein llmg_2280 (69 aa).

It belongs to the UPF0346 family.

The chain is UPF0346 protein llmg_2280 from Lactococcus lactis subsp. cremoris (strain MG1363).